The following is a 214-amino-acid chain: MDPAKIWWHSCLLSHKSWCNCTEPRNHLPGWPTSEGTSTEDGDIITDAEMLTLAEDTEGLHTTNKPDKPTSTALPINHFQADFMTAFQNYLSPHHHKTLISTPCDPATMTRTESSQKKVSDALQTLLTLATEDILSPPSPQHQTRSRVPAGMRGRWAAKQLENPADAEKDAADHRRRRTRRQLRYRQRVTRSPPYPDLGEPLESSSSSDSLDAY.

The tract at residues 131 to 214 is disordered; that stretch reads TEDILSPPSP…SSSSDSLDAY (84 aa). A compositionally biased stretch (basic residues) spans 174 to 189; the sequence is HRRRRTRRQLRYRQRV. Low complexity predominate over residues 197 to 214; that stretch reads DLGEPLESSSSSDSLDAY.

This is an uncharacterized protein from Tupaia.